A 199-amino-acid polypeptide reads, in one-letter code: Holliday junction branch migration complex subunit RuvA (199 aa).

The interval methionine 1–arginine 64 is domain I. The tract at residues threonine 65–glutamate 143 is domain II. The flexible linker stretch occupies residues alanine 144–alanine 154. The domain III stretch occupies residues alanine 154–lysine 199.

It belongs to the RuvA family. In terms of assembly, homotetramer. Forms an RuvA(8)-RuvB(12)-Holliday junction (HJ) complex. HJ DNA is sandwiched between 2 RuvA tetramers; dsDNA enters through RuvA and exits via RuvB. An RuvB hexamer assembles on each DNA strand where it exits the tetramer. Each RuvB hexamer is contacted by two RuvA subunits (via domain III) on 2 adjacent RuvB subunits; this complex drives branch migration. In the full resolvosome a probable DNA-RuvA(4)-RuvB(12)-RuvC(2) complex forms which resolves the HJ.

The protein resides in the cytoplasm. Its function is as follows. The RuvA-RuvB-RuvC complex processes Holliday junction (HJ) DNA during genetic recombination and DNA repair, while the RuvA-RuvB complex plays an important role in the rescue of blocked DNA replication forks via replication fork reversal (RFR). RuvA specifically binds to HJ cruciform DNA, conferring on it an open structure. The RuvB hexamer acts as an ATP-dependent pump, pulling dsDNA into and through the RuvAB complex. HJ branch migration allows RuvC to scan DNA until it finds its consensus sequence, where it cleaves and resolves the cruciform DNA. In Geobacter sulfurreducens (strain ATCC 51573 / DSM 12127 / PCA), this protein is Holliday junction branch migration complex subunit RuvA.